A 319-amino-acid chain; its full sequence is 12-(S)-hydroxy-5,8,10,14-eicosatetraenoic acid receptor (319 aa).

The Extracellular segment spans residues 1–16; it reads MERTNCSAASTVVETA. The N-linked (GlcNAc...) asparagine glycan is linked to asparagine 5. A helical transmembrane segment spans residues 17-37; that stretch reads VGTMLTLECVLGLMGNAVALW. The Cytoplasmic portion of the chain corresponds to 38–52; it reads TFFYRLKVWKPYAVY. A helical membrane pass occupies residues 53 to 73; the sequence is LFNLVVADLLLATSLPFFAAF. Over 74 to 91 the chain is Extracellular; it reads YLKGKTWKLGHMPCQVLL. The chain crosses the membrane as a helical span at residues 92–110; it reads FLLAFSRGVGVAFLTTVAL. Topologically, residues 111 to 131 are cytoplasmic; sequence DRYLRVVHPRLRVNLLSLRAA. The helical transmembrane segment at 132–152 threads the bilayer; that stretch reads WGISSLIWLLMVVLTPQNLLT. Topologically, residues 153 to 180 are extracellular; that stretch reads CRTTQNSTECPSFYPTGGAKAIATCQEV. The chain crosses the membrane as a helical span at residues 181 to 201; that stretch reads LFFLQVLLPFGLISFCNSGLI. Residues 202–219 are Cytoplasmic-facing; sequence RTLQKRLRESDKQPRIRR. A helical membrane pass occupies residues 220–240; that stretch reads ARVLVAIVLLLFGLCFLPSVL. The Extracellular segment spans residues 241–265; it reads TRVLVHIFQEFKSCSVQQAIVRASD. Residues 266 to 284 form a helical membrane-spanning segment; the sequence is IAGSLTCLHSTLSPAIYCF. The Cytoplasmic segment spans residues 285–319; the sequence is SNPAFTHSYRKVLKSLRGRRKAAESPSDNLRDSYS.

Belongs to the G-protein coupled receptor 1 family. Interacts with KRAS; in a farnesylation-dependent manner.

The protein resides in the cell membrane. Functionally, high-affinity receptor for 12-(S)-hydroxy-5,8,10,14-eicosatetraenoic acid (12-S-HETE), with much lower affinities for other HETE isomers. 12-S-HETE is a eicosanoid, a 12-lipoxygenase (ALOX12) metabolite of arachidonic acid, involved in many physiologic and pathologic processes, such as cell growth, adhesion, inflammation and cancer promotion. 12-S-HETE-binding leads to activation of ERK1/2 (MAPK3/MAPK1), MEK, and NF-kappa-B pathways and leads to cell growth. Plays a crucial role for proliferation, survival and macropinocytosis of KRAS-dependent cancer cells by mediating the translocation of KRAS from the endoplasmic reticulum to the plasma membrane (PM) and its association with the PM. Contributes to enhanced immune responses by inducing dendrite protrusion of small intestinal CX3CR1(+) phagocytes for the uptake of luminal antigens. Also acts as a key receptor for 12-(S)-HETE-mediated liver ischemia reperfusion injury. In terms of biological role, proton-sensing G protein-coupled receptor. This chain is 12-(S)-hydroxy-5,8,10,14-eicosatetraenoic acid receptor (Gpr31), found in Mus musculus (Mouse).